Reading from the N-terminus, the 325-residue chain is Phenylalanine--tRNA ligase alpha subunit (325 aa).

Glu-251 serves as a coordination point for Mg(2+).

The protein belongs to the class-II aminoacyl-tRNA synthetase family. Phe-tRNA synthetase alpha subunit type 1 subfamily. As to quaternary structure, tetramer of two alpha and two beta subunits. Mg(2+) is required as a cofactor.

Its subcellular location is the cytoplasm. The enzyme catalyses tRNA(Phe) + L-phenylalanine + ATP = L-phenylalanyl-tRNA(Phe) + AMP + diphosphate + H(+). This Thermotoga maritima (strain ATCC 43589 / DSM 3109 / JCM 10099 / NBRC 100826 / MSB8) protein is Phenylalanine--tRNA ligase alpha subunit (pheS).